Consider the following 638-residue polypeptide: LIM domain kinase 2 (638 aa).

LIM zinc-binding domains are found at residues Cys-12 to Asp-63 and Cys-72 to Cys-124. One can recognise a PDZ domain in the interval Leu-152–Pro-239. Thr-210 bears the Phosphothreonine mark. The segment covering Met-257–Leu-266 has biased composition (polar residues). Residues Met-257–Leu-304 are disordered. The span at Asp-270–Leu-279 shows a compositional bias: basic and acidic residues. Residues Arg-286–Leu-304 show a composition bias toward low complexity. Residues Ser-293 and Ser-298 each carry the phosphoserine modification. Residues Leu-331–Leu-608 form the Protein kinase domain. Residues Leu-337 to Ala-345 and Lys-360 contribute to the ATP site. The active site involves Asp-451. A Phosphothreonine; by ROCK1 and CDC42BP modification is found at Thr-505.

Belongs to the protein kinase superfamily. TKL Ser/Thr protein kinase family. Binds ROCK1 and MARF1. Interacts with NISCH. In terms of processing, phosphorylated on serine and/or threonine residues by ROCK1. As to expression, found in various tissues at moderate levels, except for testis, which shows very low expression.

The protein localises to the cytoplasm. It is found in the nucleus. Its subcellular location is the perinuclear region. It localises to the cytoskeleton. The protein resides in the spindle. The protein localises to the microtubule organizing center. It is found in the centrosome. The catalysed reaction is L-seryl-[protein] + ATP = O-phospho-L-seryl-[protein] + ADP + H(+). It carries out the reaction L-threonyl-[protein] + ATP = O-phospho-L-threonyl-[protein] + ADP + H(+). In terms of biological role, serine/threonine-protein kinase that plays an essential role in the regulation of actin filament dynamics. Acts downstream of several Rho family GTPase signal transduction pathways. Involved in astral microtubule organization and mitotic spindle orientation during early stages of mitosis by mediating phosphorylation of TPPP. Displays serine/threonine-specific phosphorylation of myelin basic protein and histone (MBP) in vitro. Suppresses ciliogenesis via multiple pathways; phosphorylation of CFL1, directional trafficking of ciliary vesicles to the ciliary base, and by facilitating YAP1 nuclear localization where it acts as a transcriptional corepressor of the TEAD4 target genes AURKA and PLK1. The chain is LIM domain kinase 2 (Limk2) from Rattus norvegicus (Rat).